Here is a 62-residue protein sequence, read N- to C-terminus: Ribulose bisphosphate carboxylase/oxygenase activase, chloroplastic (62 aa).

This sequence belongs to the RuBisCO activase family.

It is found in the plastid. The protein localises to the chloroplast stroma. Activation of RuBisCO (ribulose-1,5-bisphosphate carboxylase/oxygenase; EC 4.1.1.39) involves the ATP-dependent carboxylation of the epsilon-amino group of lysine leading to a carbamate structure. The polypeptide is Ribulose bisphosphate carboxylase/oxygenase activase, chloroplastic (Vitis sp. (Grape)).